The primary structure comprises 711 residues: Protein Smaug homolog 1 (711 aa).

Position 168 is a phosphoserine (Ser-168). Positions 278 to 323 (ARGPQCLPSDHAPLSPQSSVASSGSGGSEHLEDQTTARNTFQEEGS) are disordered. Positions 323 to 396 (SGMKDVPAWL…LKSLERDIIE (74 aa)) constitute an SAM domain. Ser-420 is modified (phosphoserine). Disordered regions lie at residues 422 to 448 (STTP…SAAA) and 565 to 588 (NRGF…GRRN). Position 424 is a phosphothreonine (Thr-424). Arg-566 is subject to Omega-N-methylarginine. Residues 568–581 (FGQSNSLPTASSVG) show a composition bias toward polar residues. A Phosphoserine modification is found at Ser-573.

This sequence belongs to the SMAUG family. In terms of tissue distribution, expressed in brain (at protein level).

The protein localises to the cytoplasm. The protein resides in the cell projection. Its subcellular location is the dendrite. It is found in the synapse. It localises to the synaptosome. Functionally, acts as a translational repressor of SRE-containing messengers. This chain is Protein Smaug homolog 1 (Samd4a), found in Mus musculus (Mouse).